The following is a 107-amino-acid chain: Large ribosomal subunit protein uL24 (107 aa).

It belongs to the universal ribosomal protein uL24 family. Part of the 50S ribosomal subunit.

Its function is as follows. One of two assembly initiator proteins, it binds directly to the 5'-end of the 23S rRNA, where it nucleates assembly of the 50S subunit. In terms of biological role, one of the proteins that surrounds the polypeptide exit tunnel on the outside of the subunit. The protein is Large ribosomal subunit protein uL24 of Streptomyces griseus subsp. griseus (strain JCM 4626 / CBS 651.72 / NBRC 13350 / KCC S-0626 / ISP 5235).